The sequence spans 614 residues: MPMYRSRTSTHGRNMAGARGLWRATGMTESDFGKPIIAIVNSFTQFVPGHVHLKDLGQMVAREVESAGGVAKEFNTIAVDDGIAMGHDGMLYSLPSREVIADSVEYMVNAHCADAMVCISNCDKITPGMMMAAMRLNIPVIFVSGGPMEAGKIDIDSLDAKKIDLVDAMVAAASDKLTDEEVQHIEENACPTCGSCSGMFTANSMNCLAEALGLALPGNGSTLATHSDRKQLFLEAGRKIVEITKRHYEQNEKGLLPREIATFEAFENAMSLDIAMGGSTNTVLHLLAIAHEGKVDFTMQDIDRLSRKVPCLCKVAPNIENVHMEDVHRAGGIFSILGELSRAGLLHNDVPTVHSDSMGEAIAHWDIAVADNQAAKDLFKAAPGGVRTTQAFSQSNRFKDLDIDRKGGVIRSKEHAFSQDGGLAVLFGNIALDGCIVKTAGVDASILKFTGKAYVCESQDQAVNDILTGKVQAGDVVVIRYEGPRGGPGMQEMLYPTSYLKSKGLGKDCALLTDGRFSGGTSGLSIGHVSPEAAEGGTIGLVEHGDTIEIDIPNRSIHLAVDEATLAARRAAQDEKGWKPVAKRKRKVSTALKAYALLATSAAKGAVRQLPDDE.

D81 is a binding site for Mg(2+). C122 contributes to the [2Fe-2S] cluster binding site. Mg(2+) contacts are provided by D123 and K124. K124 is modified (N6-carboxylysine). C196 lines the [2Fe-2S] cluster pocket. A Mg(2+)-binding site is contributed by E492. S518 serves as the catalytic Proton acceptor.

This sequence belongs to the IlvD/Edd family. As to quaternary structure, homodimer. It depends on [2Fe-2S] cluster as a cofactor. The cofactor is Mg(2+).

It carries out the reaction (2R)-2,3-dihydroxy-3-methylbutanoate = 3-methyl-2-oxobutanoate + H2O. The catalysed reaction is (2R,3R)-2,3-dihydroxy-3-methylpentanoate = (S)-3-methyl-2-oxopentanoate + H2O. It participates in amino-acid biosynthesis; L-isoleucine biosynthesis; L-isoleucine from 2-oxobutanoate: step 3/4. It functions in the pathway amino-acid biosynthesis; L-valine biosynthesis; L-valine from pyruvate: step 3/4. Its function is as follows. Functions in the biosynthesis of branched-chain amino acids. Catalyzes the dehydration of (2R,3R)-2,3-dihydroxy-3-methylpentanoate (2,3-dihydroxy-3-methylvalerate) into 2-oxo-3-methylpentanoate (2-oxo-3-methylvalerate) and of (2R)-2,3-dihydroxy-3-methylbutanoate (2,3-dihydroxyisovalerate) into 2-oxo-3-methylbutanoate (2-oxoisovalerate), the penultimate precursor to L-isoleucine and L-valine, respectively. The chain is Dihydroxy-acid dehydratase from Ruegeria sp. (strain TM1040) (Silicibacter sp.).